The chain runs to 122 residues: Ribosomal protein eL22-like 1 (122 aa).

3 positions are modified to phosphoserine: Ser-112, Ser-118, and Ser-120.

It belongs to the eukaryotic ribosomal protein eL22 family.

This is Ribosomal protein eL22-like 1 (Rpl22l1) from Mus musculus (Mouse).